Reading from the N-terminus, the 166-residue chain is Protein-export protein SecB (166 aa).

The protein belongs to the SecB family. In terms of assembly, homotetramer, a dimer of dimers. One homotetramer interacts with 1 SecA dimer.

The protein localises to the cytoplasm. One of the proteins required for the normal export of preproteins out of the cell cytoplasm. It is a molecular chaperone that binds to a subset of precursor proteins, maintaining them in a translocation-competent state. It also specifically binds to its receptor SecA. In Rhizorhabdus wittichii (strain DSM 6014 / CCUG 31198 / JCM 15750 / NBRC 105917 / EY 4224 / RW1) (Sphingomonas wittichii), this protein is Protein-export protein SecB.